The chain runs to 120 residues: Myohemerythrin (120 aa).

7 residues coordinate Fe cation: His-26, His-56, Glu-60, His-75, His-79, His-108, and Asp-113.

Belongs to the hemerythrin family. Monomer.

It is found in the cytoplasm. Its function is as follows. Myohemerythrin is an oxygen-binding protein found in the retractor muscles of certain worms. The oxygen-binding site contains two iron atoms. The chain is Myohemerythrin from Theromyzon tessulatum (Duck leech).